We begin with the raw amino-acid sequence, 649 residues long: Sulfate transporter 1.1 (649 aa).

The interval 1–20 (MSGTINPPDGGGSGARNPPV) is disordered. The Cytoplasmic segment spans residues 1 to 86 (MSGTINPPDG…AREYTLRKFR (86 aa)). A helical membrane pass occupies residues 87-107 (GDLIAGLTIASLCIPQDIGYA). Residues 108 to 111 (KLAN) are Extracellular-facing. Residues 112-132 (VDPKYGLYSSFVPPLIYAGMG) traverse the membrane as a helical segment. The Cytoplasmic segment spans residues 133–136 (SSRD). A helical transmembrane segment spans residues 137 to 157 (IAIGPVAVVSLLVGTLCQAVI). Topologically, residues 158–168 (DPKKNPEDYLR) are extracellular. A run of 2 helical transmembrane segments spans residues 169–189 (LVFTATFFAGIFQAGLGFLRL) and 190–210 (GFLIDFLSHAAVVGFMGGAAI). Residues 211–248 (TIALQQLKGFLGIKTFTKKTDIVSVMHSVFKNAEHGWN) lie on the Extracellular side of the membrane. Residues 249-269 (WQTIVIGASFLTFLLVTKFIG) form a helical membrane-spanning segment. Over 270–275 (KRNRKL) the chain is Cytoplasmic. A helical transmembrane segment spans residues 276–296 (FWVPAIAPLISVIISTFFVFI). At 297-334 (FRADKQGVQIVKHIDQGINPISVHKIFFSGKYFTEGIR) the chain is on the extracellular side. Residues 335–355 (IGGIAGMVALTEAVAIARTFA) traverse the membrane as a helical segment. Residues 356 to 367 (AMKDYQIDGNKE) lie on the Cytoplasmic side of the membrane. Residues 368–388 (MIALGTMNVVGSMTSCYIATG) traverse the membrane as a helical segment. Residues 389 to 404 (SFSRSAVNFMAGVETA) lie on the Extracellular side of the membrane. The helical transmembrane segment at 405–425 (VSNIVMAIVVALTLEFITPLF) threads the bilayer. The Cytoplasmic portion of the chain corresponds to 426 to 431 (KYTPNA). A helical membrane pass occupies residues 432–452 (ILAAIIISAVLGLIDIDAAIL). Residues 453–465 (IWRIDKLDFLACM) lie on the Extracellular side of the membrane. Residues 466 to 486 (GAFLGVIFISVEIGLLIAVVI) form a helical membrane-spanning segment. Over 487 to 649 (SFAKILLQVT…CSTEVAEQQT (163 aa)) the chain is Cytoplasmic. Positions 517–640 (QYPDAAQIPG…LTVGDAVAVC (124 aa)) constitute an STAS domain.

It belongs to the SLC26A/SulP transporter (TC 2.A.53) family. Interacts with OASA1 through its STAS domain. Expressed in lateral root cap, root hairs, epidermal and cortical cells of roots.

It is found in the membrane. High-affinity H(+)/sulfate cotransporter that mediates the uptake of the environmental sulfate by plant roots under low-sulfur conditions. Plays a central role in the regulation of sulfate assimilation. The polypeptide is Sulfate transporter 1.1 (SULTR1;1) (Arabidopsis thaliana (Mouse-ear cress)).